The chain runs to 324 residues: Beta-ketoacyl-[acyl-carrier-protein] synthase III (324 aa).

Residues Cys112 and His249 contribute to the active site. The ACP-binding stretch occupies residues Gln250 to Arg254. Asn279 is a catalytic residue.

The protein belongs to the thiolase-like superfamily. FabH family. As to quaternary structure, homodimer.

It is found in the cytoplasm. It catalyses the reaction malonyl-[ACP] + acetyl-CoA + H(+) = 3-oxobutanoyl-[ACP] + CO2 + CoA. It functions in the pathway lipid metabolism; fatty acid biosynthesis. Its function is as follows. Catalyzes the condensation reaction of fatty acid synthesis by the addition to an acyl acceptor of two carbons from malonyl-ACP. Catalyzes the first condensation reaction which initiates fatty acid synthesis and may therefore play a role in governing the total rate of fatty acid production. Possesses both acetoacetyl-ACP synthase and acetyl transacylase activities. Its substrate specificity determines the biosynthesis of branched-chain and/or straight-chain of fatty acids. The chain is Beta-ketoacyl-[acyl-carrier-protein] synthase III from Streptococcus pyogenes serotype M2 (strain MGAS10270).